A 434-amino-acid chain; its full sequence is Serine--tRNA ligase (434 aa).

241–243 contacts L-serine; sequence TAE. 272-274 serves as a coordination point for ATP; it reads RSE. Residue E295 coordinates L-serine. An ATP-binding site is contributed by 359-362; sequence EISS. Residue S395 coordinates L-serine.

Belongs to the class-II aminoacyl-tRNA synthetase family. Type-1 seryl-tRNA synthetase subfamily. As to quaternary structure, homodimer. The tRNA molecule binds across the dimer.

It is found in the cytoplasm. The catalysed reaction is tRNA(Ser) + L-serine + ATP = L-seryl-tRNA(Ser) + AMP + diphosphate + H(+). The enzyme catalyses tRNA(Sec) + L-serine + ATP = L-seryl-tRNA(Sec) + AMP + diphosphate + H(+). It participates in aminoacyl-tRNA biosynthesis; selenocysteinyl-tRNA(Sec) biosynthesis; L-seryl-tRNA(Sec) from L-serine and tRNA(Sec): step 1/1. Catalyzes the attachment of serine to tRNA(Ser). Is also able to aminoacylate tRNA(Sec) with serine, to form the misacylated tRNA L-seryl-tRNA(Sec), which will be further converted into selenocysteinyl-tRNA(Sec). This Glaesserella parasuis serovar 5 (strain SH0165) (Haemophilus parasuis) protein is Serine--tRNA ligase.